The following is a 353-amino-acid chain: 2-oxoglutarate-Fe(II) type oxidoreductase ppzD (353 aa).

The Fe2OG dioxygenase domain occupies 181–292 (NTSELRLNHY…RYSVAYFGKP (112 aa)). Positions 208, 210, and 268 each coordinate Fe cation. Arginine 283 lines the 2-oxoglutarate pocket.

This sequence belongs to the iron/ascorbate-dependent oxidoreductase family. It depends on Fe(2+) as a cofactor.

It catalyses the reaction L-proline + 2-oxoglutarate + O2 = trans-4-hydroxy-L-proline + succinate + CO2. The enzyme catalyses L-proline + 2-oxoglutarate + O2 = trans-3-hydroxy-L-proline + succinate + CO2. It carries out the reaction D-proline + 2-oxoglutarate + O2 = cis-4-hydroxy-D-proline + succinate + CO2. It participates in secondary metabolite biosynthesis. Functionally, 2-oxoglutarate-Fe(II) type oxidoreductase; part of the gene cluster that mediates the biosynthesis of pyrrolopyrazines, secondary metabolites showing insecticidal activity. Within the pathway, ppzD converts L-proline into trans-4-hydroxy-L-proline as a major product, yielding a key precursor for peramine biosynthesis. PpzD is also able to convert L-proline into trans-3-hydroxy-L-proline. The single multifunctional NRPS ppzA is sufficient to produce peramine via condensation of 1-pyrroline-5-carboxylate and arginine, N-methylation of the alpha-amino group of arginine and reduction of the thioester and the cyclization to form an iminium ion resulting in release from the peptide synthetase. Deprotonation of this intermediate and oxidation of the pyrroline ring would give rise to peramine. In Epichloe species that produce only peramine, the peramine synthetase gene is not localized in a gene cluster, in contrast to Metarhizium species that contain additional pyrrolopyrazine biosynthesis genes. The 2-oxoglutarate-Fe(II) type oxidoreductase ppzC hydroxylates peramine to yield the newly identified compound 8-hydroxyperamine whereas ppzD converts L-proline into trans-4-hydroxy-L-proline, a precursor of peramine biosynthesis. In Metarhizium rileyi (strain RCEF 4871) (Nomuraea rileyi), this protein is 2-oxoglutarate-Fe(II) type oxidoreductase ppzD.